The chain runs to 404 residues: Beta-ketoacyl-[acyl-carrier-protein] synthase III, chloroplastic (404 aa).

The transit peptide at 1–43 (MANASGFFTHPSIPNLRSRIHVPVRVSGSGFCVSNRFSKRVLC) directs the protein to the chloroplast. Catalysis depends on residues cysteine 179, histidine 330, and asparagine 360.

This sequence belongs to the thiolase-like superfamily. FabH family.

The protein resides in the plastid. It localises to the chloroplast. It catalyses the reaction malonyl-[ACP] + acetyl-CoA + H(+) = 3-oxobutanoyl-[ACP] + CO2 + CoA. The protein operates within lipid metabolism; fatty acid biosynthesis. Functionally, catalyzes the condensation reaction of fatty acid synthesis by the addition to an acyl acceptor of two carbons from malonyl-ACP. KAS III catalyzes the first condensation reaction which initiates fatty acid synthesis and may therefore play a role in governing the total rate of fatty acid production. Possesses both acetoacetyl-ACP synthase and acetyl transacylase activities. In Arabidopsis thaliana (Mouse-ear cress), this protein is Beta-ketoacyl-[acyl-carrier-protein] synthase III, chloroplastic.